Reading from the N-terminus, the 116-residue chain is Immunoglobulin heavy variable 2-4 (116 aa).

An N-terminal signal peptide occupies residues 1 to 19 (MAVLVLLFCLVTFPSCVLS). The Ig-like domain maps to 20–116 (QVQLKQSGPG…DDTAIYYCAK (97 aa)). Cysteines 41 and 114 form a disulfide.

In Mus musculus (Mouse), this protein is Immunoglobulin heavy variable 2-4.